Reading from the N-terminus, the 501-residue chain is ATP synthase subunit alpha (501 aa).

Gly169 to Thr176 lines the ATP pocket.

The protein belongs to the ATPase alpha/beta chains family. In terms of assembly, F-type ATPases have 2 components, CF(1) - the catalytic core - and CF(0) - the membrane proton channel. CF(1) has five subunits: alpha(3), beta(3), gamma(1), delta(1), epsilon(1). CF(0) has three main subunits: a(1), b(2) and c(9-12). The alpha and beta chains form an alternating ring which encloses part of the gamma chain. CF(1) is attached to CF(0) by a central stalk formed by the gamma and epsilon chains, while a peripheral stalk is formed by the delta and b chains.

Its subcellular location is the cell membrane. It catalyses the reaction ATP + H2O + 4 H(+)(in) = ADP + phosphate + 5 H(+)(out). Produces ATP from ADP in the presence of a proton gradient across the membrane. The alpha chain is a regulatory subunit. This is ATP synthase subunit alpha from Streptococcus pneumoniae (strain 70585).